The primary structure comprises 417 residues: Equilibrative nucleotide transporter 7 (417 aa).

A run of 11 helical transmembrane segments spans residues 19 to 39, 54 to 74, 84 to 104, 110 to 130, 143 to 163, 184 to 204, 264 to 284, 293 to 315, 326 to 346, 353 to 373, and 392 to 412; these read LVCC…LTIT, VLTI…ATKE, IFGY…DLAS, VVAY…DAFV, PDFI…TSVL, LFIG…TLVF, LGIN…GFLY, GDWY…RFIP, KWIT…YFTA, WMLF…VCIF, and MCVF…LWLI.

This sequence belongs to the SLC29A/ENT transporter (TC 2.A.57) family. As to expression, expressed in leaves and flowers.

It is found in the cell membrane. Nucleoside transporter that can mediate uptake of adenosine, uridine, guanosine or cytidine when expressed in a heterologous system (yeast). The chain is Equilibrative nucleotide transporter 7 (ENT7) from Arabidopsis thaliana (Mouse-ear cress).